The primary structure comprises 92 residues: Small ribosomal subunit protein bS20 (92 aa).

The protein belongs to the bacterial ribosomal protein bS20 family.

In terms of biological role, binds directly to 16S ribosomal RNA. The polypeptide is Small ribosomal subunit protein bS20 (Methylacidiphilum infernorum (isolate V4) (Methylokorus infernorum (strain V4))).